The primary structure comprises 465 residues: MVEVPSFRSNEHFPQLCDKVTVKWDKKRGRFVEAIEDIPIGTVVCVETGITVNVDPQNCYRCLKITENASFAYCKNCEEFYEPDEIACGEFDELGIFKLAAHLVFSYPFADIASLVQSSDPEPPSCAPKALSTQDIEAIFQLTPFPEIGEAFKAPAIQNAIKRIVESLETDENWGRLDQISRTMTFTKALRIMAERSAKNAHTIYSIEQIESQEDNLPMATGLFPISSIFNHSCTPNISGFFVRNTFIFVSQGVRAREELLDSYGVTYHQHTFEQRTNFLASVSGFICHCESCFKMKSLKVLEKPKKYPETIATNASCFTDITSYTENIPRGSKELENLIIAFARRPDSETYTELIFQFWKKFVENAKFRGITYDPYLVRPYVEMTILAWNKEVGCENEEKMSLLIVTHRLLRNCYVDLHPLSELVVKLVNVVANQNADEINRTLEKLKLRARMLWKYSEQSEDL.

Positions Asp-18–Gly-265 constitute an SET domain.

Belongs to the class V-like SAM-binding methyltransferase superfamily.

The polypeptide is SET domain-containing protein 3 (set-3) (Caenorhabditis elegans).